The sequence spans 177 residues: Cyclic pyranopterin monophosphate synthase 3 (177 aa).

Residues L79 to H81 and M116 to E117 each bind substrate. Residue D131 is part of the active site. Residues K150 to C177 are disordered.

Belongs to the MoaC family. As to quaternary structure, homohexamer; trimer of dimers.

The enzyme catalyses (8S)-3',8-cyclo-7,8-dihydroguanosine 5'-triphosphate = cyclic pyranopterin phosphate + diphosphate. It participates in cofactor biosynthesis; molybdopterin biosynthesis. In terms of biological role, catalyzes the conversion of (8S)-3',8-cyclo-7,8-dihydroguanosine 5'-triphosphate to cyclic pyranopterin monophosphate (cPMP). In Mycobacterium bovis (strain ATCC BAA-935 / AF2122/97), this protein is Cyclic pyranopterin monophosphate synthase 3 (moaC3).